The sequence spans 213 residues: Major fimbrial subunit (213 aa).

A signal peptide spans 1 to 20 (MKKTLLGSLILLAFAGNVQA). A disulfide bridge links C41 with C81.

It belongs to the fimbrial protein family.

Its subcellular location is the fimbrium. Mediates adherence to oropharyngeal epithelial cells. Helps the airway colonization process. The chain is Major fimbrial subunit (hifA) from Haemophilus influenzae.